A 249-amino-acid polypeptide reads, in one-letter code: Pyridoxine 5'-phosphate synthase (249 aa).

Position 10 (Asn-10) interacts with 3-amino-2-oxopropyl phosphate. 12–13 (DH) is a 1-deoxy-D-xylulose 5-phosphate binding site. A 3-amino-2-oxopropyl phosphate-binding site is contributed by Arg-21. His-46 functions as the Proton acceptor in the catalytic mechanism. Residues Arg-48 and His-53 each contribute to the 1-deoxy-D-xylulose 5-phosphate site. The active-site Proton acceptor is the Glu-73. A 1-deoxy-D-xylulose 5-phosphate-binding site is contributed by Thr-103. His-194 (proton donor) is an active-site residue. 3-amino-2-oxopropyl phosphate contacts are provided by residues Gly-195 and 216 to 217 (GH).

The protein belongs to the PNP synthase family. Homooctamer; tetramer of dimers.

It is found in the cytoplasm. It carries out the reaction 3-amino-2-oxopropyl phosphate + 1-deoxy-D-xylulose 5-phosphate = pyridoxine 5'-phosphate + phosphate + 2 H2O + H(+). The protein operates within cofactor biosynthesis; pyridoxine 5'-phosphate biosynthesis; pyridoxine 5'-phosphate from D-erythrose 4-phosphate: step 5/5. Its function is as follows. Catalyzes the complicated ring closure reaction between the two acyclic compounds 1-deoxy-D-xylulose-5-phosphate (DXP) and 3-amino-2-oxopropyl phosphate (1-amino-acetone-3-phosphate or AAP) to form pyridoxine 5'-phosphate (PNP) and inorganic phosphate. This chain is Pyridoxine 5'-phosphate synthase, found in Rhodospirillum rubrum (strain ATCC 11170 / ATH 1.1.1 / DSM 467 / LMG 4362 / NCIMB 8255 / S1).